The primary structure comprises 140 residues: Phosphoribosyl-AMP cyclohydrolase (140 aa).

Residue Asp78 participates in Mg(2+) binding. Residue Cys79 participates in Zn(2+) binding. Residues Asp80 and Asp82 each contribute to the Mg(2+) site. Cys96 and Cys103 together coordinate Zn(2+).

Belongs to the PRA-CH family. As to quaternary structure, homodimer. Mg(2+) serves as cofactor. Requires Zn(2+) as cofactor.

The protein localises to the cytoplasm. The enzyme catalyses 1-(5-phospho-beta-D-ribosyl)-5'-AMP + H2O = 1-(5-phospho-beta-D-ribosyl)-5-[(5-phospho-beta-D-ribosylamino)methylideneamino]imidazole-4-carboxamide. Its pathway is amino-acid biosynthesis; L-histidine biosynthesis; L-histidine from 5-phospho-alpha-D-ribose 1-diphosphate: step 3/9. Catalyzes the hydrolysis of the adenine ring of phosphoribosyl-AMP. The chain is Phosphoribosyl-AMP cyclohydrolase from Ralstonia nicotianae (strain ATCC BAA-1114 / GMI1000) (Ralstonia solanacearum).